Consider the following 267-residue polypeptide: Acetyl-coenzyme A carboxylase carboxyl transferase subunit beta 1 (267 aa).

The CoA carboxyltransferase N-terminal domain occupies 9–267; the sequence is TWQACPKCGR…NYGIGRSAHG (259 aa). 4 residues coordinate Zn(2+): C13, C16, C31, and C34. Residues 13 to 34 form a C4-type zinc finger; it reads CPKCGRHVHQRQWGTYQQCPYC.

The protein belongs to the AccD/PCCB family. Acetyl-CoA carboxylase is a heterohexamer composed of biotin carboxyl carrier protein (AccB), biotin carboxylase (AccC) and two subunits each of ACCase subunit alpha (AccA) and ACCase subunit beta (AccD). Zn(2+) is required as a cofactor.

The protein localises to the cytoplasm. The catalysed reaction is N(6)-carboxybiotinyl-L-lysyl-[protein] + acetyl-CoA = N(6)-biotinyl-L-lysyl-[protein] + malonyl-CoA. It functions in the pathway lipid metabolism; malonyl-CoA biosynthesis; malonyl-CoA from acetyl-CoA: step 1/1. Its function is as follows. Component of the acetyl coenzyme A carboxylase (ACC) complex. Biotin carboxylase (BC) catalyzes the carboxylation of biotin on its carrier protein (BCCP) and then the CO(2) group is transferred by the transcarboxylase to acetyl-CoA to form malonyl-CoA. The protein is Acetyl-coenzyme A carboxylase carboxyl transferase subunit beta 1 of Lactiplantibacillus plantarum (strain JDM1) (Lactobacillus plantarum).